Consider the following 317-residue polypeptide: tRNA pseudouridine synthase B (317 aa).

Asp47 (nucleophile) is an active-site residue.

Belongs to the pseudouridine synthase TruB family. Type 1 subfamily.

It catalyses the reaction uridine(55) in tRNA = pseudouridine(55) in tRNA. In terms of biological role, responsible for synthesis of pseudouridine from uracil-55 in the psi GC loop of transfer RNAs. The polypeptide is tRNA pseudouridine synthase B (Shewanella woodyi (strain ATCC 51908 / MS32)).